The sequence spans 360 residues: Chorismate synthase (360 aa).

Arg48 and Arg54 together coordinate NADP(+). FMN-binding positions include 125–127 (RSS), 246–247 (NA), Gly286, 301–305 (KPTSS), and Arg327.

The protein belongs to the chorismate synthase family. As to quaternary structure, homotetramer. FMNH2 is required as a cofactor.

It carries out the reaction 5-O-(1-carboxyvinyl)-3-phosphoshikimate = chorismate + phosphate. The protein operates within metabolic intermediate biosynthesis; chorismate biosynthesis; chorismate from D-erythrose 4-phosphate and phosphoenolpyruvate: step 7/7. Its function is as follows. Catalyzes the anti-1,4-elimination of the C-3 phosphate and the C-6 proR hydrogen from 5-enolpyruvylshikimate-3-phosphate (EPSP) to yield chorismate, which is the branch point compound that serves as the starting substrate for the three terminal pathways of aromatic amino acid biosynthesis. This reaction introduces a second double bond into the aromatic ring system. The chain is Chorismate synthase from Glaesserella parasuis serovar 5 (strain SH0165) (Haemophilus parasuis).